Reading from the N-terminus, the 158-residue chain is Encapsulin nanocompartment cargo protein EncB (158 aa).

3 residues coordinate Fe cation: Glu22, Glu52, and His55. 2 consecutive short sequence motifs (di-iron-binding motif) follow at residues 52–55 (EKEH) and 58–61 (EAVH). A disordered region spans residues 92-158 (ATVHVPTPDG…RGGGGSGSGR (67 aa)). Residues 142–149 (LTVGSLRR) form a probable targeting peptide region. The segment covering 148–158 (RRGGGGSGSGR) has biased composition (gly residues).

The protein belongs to the ferritin-like superfamily.

The protein localises to the encapsulin nanocompartment. Cargo protein of a type 1 encapsulin nanocompartment. May help nucleate Fe atoms in the interior of the encapsulin nanocompartment. Present in about 36 copies/encapsulin nanocompartment. This Myxococcus xanthus (strain DK1622) protein is Encapsulin nanocompartment cargo protein EncB.